Here is a 135-residue protein sequence, read N- to C-terminus: MSQTANQKAKRIPLGKDASTKRRLSKVRRHFRLRKKVSGTPERPRLVVNRSARHIHVQLVDDLAGHTLAAASTTEADVRAADGDKKALSAKVGQLIAERAKAAGVEAVVFDHGGHGYHGRIAALADAAREGGLKF.

Positions 1 to 23 are disordered; it reads MSQTANQKAKRIPLGKDASTKRR.

This sequence belongs to the universal ribosomal protein uL18 family. In terms of assembly, part of the 50S ribosomal subunit; part of the 5S rRNA/L5/L18/L25 subcomplex. Contacts the 5S and 23S rRNAs.

This is one of the proteins that bind and probably mediate the attachment of the 5S RNA into the large ribosomal subunit, where it forms part of the central protuberance. This Rhodococcus jostii (strain RHA1) protein is Large ribosomal subunit protein uL18.